Reading from the N-terminus, the 539-residue chain is MATIALPWSLSLYVFLLLLATPWASAAVKNCSHLECFYNSRANVSCMWSHEEALNVTTCHVHAKSNLRHWNKTCELTLVRQASWACNLILGSFPESQSLTSVDLLDINVVCWEEKGWRRVKTCDFHPFDNLRLVAPHSLQVLHIDTQRCNISWKVSQVSHYIEPYLEFEARRRLLGHSWEDASVLSLKQRQQWLFLEMLIPSTSYEVQVRVKAQRNNTGTWSPWSQPLTFRTRPADPMKEILPMSWLRYLLLVLGCFSGFFSCVYILVKCRYLGPWLKTVLKCHIPDPSEFFSQLSSQHGGDLQKWLSSPVPLSFFSPSGPAPEISPLEVLDGDSKAVQLLLLQKDSAPLPSPSGHSQASCFTNQGYFFFHLPNALEIESCQVYFTYDPCVEEEVEEDGSRLPEGSPHPPLLPLAGEQDDYCAFPPRDDLLLFSPSLSTPNTAYGGSRAPEERSPLSLHEGLPSLASRDLMGLQRPLERMPEGDGEGLSANSSGEQASVPEGNLHGQDQDRGQGPILTLNTDAYLSLQELQAQDSVHLI.

The signal sequence occupies residues 1–26 (MATIALPWSLSLYVFLLLLATPWASA). At 27 to 240 (AVKNCSHLEC…RTRPADPMKE (214 aa)) the chain is on the extracellular side. N-linked (GlcNAc...) asparagine glycosylation is found at Asn30, Asn43, Asn55, and Asn71. A disulfide bridge connects residues Cys36 and Cys46. The cysteines at positions 74 and 86 are disulfide-linked. One can recognise a Fibronectin type-III domain in the interval 135–235 (APHSLQVLHI…QPLTFRTRPA (101 aa)). 2 N-linked (GlcNAc...) asparagine glycosylation sites follow: Asn150 and Asn216. Positions 221-225 (WSPWS) match the WSXWS motif motif. The chain crosses the membrane as a helical span at residues 241-268 (ILPMSWLRYLLLVLGCFSGFFSCVYILV). The Cytoplasmic segment spans residues 269-539 (KCRYLGPWLK…LQAQDSVHLI (271 aa)). The short motif at 281-289 (LKCHIPDPS) is the Box 1 motif element. 3 disordered regions span residues 395-419 (VEED…GEQD), 440-465 (PNTA…LPSL), and 477-516 (LERM…QGPI).

This sequence belongs to the type I cytokine receptor family. Type 4 subfamily. Non-covalent dimer of an alpha and a beta subunit. IL2R exists in 3 different forms: a high affinity dimer, an intermediate affinity monomer (beta subunit), and a low affinity monomer (alpha subunit). The high and intermediate affinity forms also associate with a gamma subunit. Interacts with SHB upon interleukin stimulation.

Its subcellular location is the cell membrane. It is found in the cell surface. In terms of biological role, receptor for interleukin-2. This beta subunit is involved in receptor mediated endocytosis and transduces the mitogenic signals of IL2. Probably in association with IL15RA, involved in the stimulation of neutrophil phagocytosis by IL15. The protein is Interleukin-2 receptor subunit beta (Il2rb) of Mus musculus (Mouse).